Here is a 404-residue protein sequence, read N- to C-terminus: AT-hook motif nuclear-localized protein 3 (404 aa).

Disordered stretches follow at residues 1-51, 70-100, and 113-133; these read MEER…VPPT, PFSLTMPTENTSAEQLKKKRGRPRKYNPDGT, and SVPLTSEFPPRKRGRGRGKSN. Polar residues predominate over residues 7-19; the sequence is TNINNNITSSFGL. A compositionally biased stretch (pro residues) spans 35 to 51; that stretch reads DPPPRPENPNPFLVPPT. The span at 71–83 shows a compositional bias: polar residues; it reads FSLTMPTENTSAE. Positions 86–94 match the Bipartite nuclear localization signal motif; sequence KKKRGRPRK. The a.T hook DNA-binding region spans 86 to 98; it reads KKKRGRPRKYNPD. The span at 123-133 shows a compositional bias: basic residues; it reads RKRGRGRGKSN. Residues 163–308 enclose the PPC domain; it reads GANFTPHVLI…RFGAQPSSIS (146 aa). Residues 359–404 are disordered; the sequence is PFSSIPVGGGGGGEVGEEEGEEDDDELEGEDEEFGGDSQSDNEIPS. Residues 373 to 393 show a composition bias toward acidic residues; the sequence is VGEEEGEEDDDELEGEDEEFG.

Homodimer. Interacts with AHL4. As to expression, expressed in both procambium and xylem precursors of the root meristem. Also detected in the endodermis in the late elongation zone and onwards.

The protein localises to the nucleus. Transcription factor that specifically binds AT-rich DNA sequences related to the nuclear matrix attachment regions (MARs). Acts redundantly with AHL4 to regulate the formation of tissue boundary between the xylem and procambium in the root meristem. This is AT-hook motif nuclear-localized protein 3 from Arabidopsis thaliana (Mouse-ear cress).